A 107-amino-acid chain; its full sequence is UPF0060 membrane protein RPB_2370 (107 aa).

4 consecutive transmembrane segments (helical) span residues 5–25 (IIYV…WGWL), 31–51 (VWWL…LTLV), 61–81 (AAYG…VEGV), and 85–105 (RWDV…LWGP).

Belongs to the UPF0060 family.

The protein localises to the cell inner membrane. The protein is UPF0060 membrane protein RPB_2370 of Rhodopseudomonas palustris (strain HaA2).